The chain runs to 154 residues: Transcriptional repressor NrdR (154 aa).

Residues 1–22 (MECPNCHKNASRVIDSRPSDEN) are disordered. Residues 3 to 34 (CPNCHKNASRVIDSRPSDENRAIRRRRECENC) fold into a zinc finger. Residues 49–139 (LLVVKNDGTR…IYRQFKDVSG (91 aa)) form the ATP-cone domain.

The protein belongs to the NrdR family. It depends on Zn(2+) as a cofactor.

Its function is as follows. Negatively regulates transcription of bacterial ribonucleotide reductase nrd genes and operons by binding to NrdR-boxes. The protein is Transcriptional repressor NrdR of Lactobacillus johnsonii (strain CNCM I-12250 / La1 / NCC 533).